A 206-amino-acid chain; its full sequence is Transmembrane 4 L6 family member 19 (206 aa).

The Cytoplasmic segment spans residues 1 to 16 (MLSFSRVVNCSRTCSR). A helical transmembrane segment spans residues 17–37 (FLGLSLGTASLCAAGANIALL). The Extracellular portion of the chain corresponds to 38 to 54 (FPNWDVTYLMRGLIGKH). The chain crosses the membrane as a helical span at residues 55-75 (AMLGSGLWGGGLMVLLAATLI). The Cytoplasmic segment spans residues 76 to 89 (SMTGSFSKSAPCLQ). Residues 90–110 (VLIALLSSGLALLGAVICFVT) traverse the membrane as a helical segment. The Extracellular portion of the chain corresponds to 111 to 171 (SGVALKDGPF…PSKAVVWHVA (61 aa)). N129 carries an N-linked (GlcNAc...) asparagine glycan. A helical membrane pass occupies residues 172 to 192 (FFSILLCISLLQLLLVAIHLV). The tract at residues 182–192 (LQLLLVAIHLV) is important for homodimerization. Residues 193-206 (NSILGLFCSFCEKH) are Cytoplasmic-facing.

It belongs to the L6 tetraspanin family. In terms of assembly, may form homodimers and homooligomers. Interacts with integrins ITGAV and ITGB3. Interacts with components of members of the V0 complex of vacuolar(H+)-ATPase (V-ATPase), including ATP6V0B and ATP6V0D2; this interaction inhibits V1-V0 complex assembly. In terms of tissue distribution, predominantly expressed in osteoclasts (at protein level). Also expressed in white adipose tissue, as well as in bone marrow-derived macrophages.

It is found in the lysosome membrane. Its subcellular location is the cytoplasm. It localises to the cytoskeleton. The protein localises to the cell projection. The protein resides in the filopodium. Functionally, negatively regulates vacuolar (H+)-ATPase (V-ATPase) activity by interacting with members of V-ATPase V0 complex and hence inhibiting V1-V0 assembly. Required for multinucleation during osteoclast differentiation. This Mus musculus (Mouse) protein is Transmembrane 4 L6 family member 19 (Tm4sf19).